A 345-amino-acid polypeptide reads, in one-letter code: Mariner Mos1 transposase (345 aa).

Positions 1–112 (MSSFVPNKEQ…VSNRLREMGK (112 aa)) are DNA-binding. 2 DNA-binding regions (H-T-H motif) span residues 24 to 55 (TAAE…RFKS) and 89 to 110 (QKQL…LREM). The interval 113-125 (IQKVGRWVPHELN) is linker. Positions 126–345 (ERQMERRKNT…CVASDGKYLE (220 aa)) are catalytic. Residues Asp156, Asp249, and Asp284 each coordinate Mg(2+).

In terms of assembly, homodimer. The complex has a trans arrangement, with each transposon end recognized by the DNA binding region of one transposase monomer and by the active site of the other monomer. Mg(2+) is required as a cofactor. It depends on Mn(2+) as a cofactor.

The protein localises to the nucleus. Mediates transposition of transposon Mos1 by a 'cut and paste' mechanism. Transposases are sequence-specific nucleases and strand transferases that catalyze transposition through an ordered series of events: sequence-specific binding of transposase to the terminal inverted repeats (IR) present at each end of the transposon, pairing of the transposon IRs in a paired-end complex (PEC), cleavage of one or both DNA strands at each transposon end, capture of target DNA, and strand transfer to insert the transposon at a new site. The protein is Mariner Mos1 transposase (mariner\T) of Drosophila mauritiana (Fruit fly).